We begin with the raw amino-acid sequence, 401 residues long: Ureide permease 4 (401 aa).

At 1–10 (MYVVESKAGA) the chain is on the extracellular side. A helical membrane pass occupies residues 11 to 31 (IGCMILSLCCLGSWPAILTLL). Over 32–40 (ERRGRLPQH) the chain is Cytoplasmic. A helical membrane pass occupies residues 41–61 (TFLDFATANLLAAIVIAFSLG). Over 62–81 (EIGKSTFLKPDFTTQLPQDN) the chain is Extracellular. A helical membrane pass occupies residues 82 to 102 (WPSVLLAVAGGVLLSIGNLAT). Over 103–104 (QY) the chain is Cytoplasmic. A helical transmembrane segment spans residues 105 to 125 (AFAFVGLSVTEVITASITVVI). At 126 to 141 (GTTLNYFLDNKINKAE) the chain is on the extracellular side. The chain crosses the membrane as a helical span at residues 142-162 (ILFPGVGCFLIAVFLGAAVHA). Residues 163–231 (SNAADVKEKL…KRAIKVFGKS (69 aa)) lie on the Cytoplasmic side of the membrane. An ATP-binding site is contributed by 224 to 231 (AIKVFGKS). A helical membrane pass occupies residues 232–252 (IMIGLFITLFAGISLSLFSPA). Topologically, residues 253 to 275 (FNLATNDQWSTLPKGVPKLVVYT) are extracellular. The chain crosses the membrane as a helical span at residues 276–296 (AFFYFSIAGFLISLILNLIFL). The Cytoplasmic portion of the chain corresponds to 297–318 (YRPMVGLARSSLKKYIYDSKGR). A helical membrane pass occupies residues 319-339 (GWAVFAGFLCGFGNGLQFMGG). Over 340–344 (QAAGY) the chain is Extracellular. The helical transmembrane segment at 345–365 (AAADSVQALPLVSTFWGIVLF) threads the bilayer. Residues 366–374 (GEYRKSSKR) lie on the Cytoplasmic side of the membrane. Residues 375 to 395 (TYALLVSMLAMFVAAVAILMA) form a helical membrane-spanning segment. Topologically, residues 396 to 401 (SSGHRK) are extracellular.

It belongs to the plant ureide permease (TC 2.A.7.19) family. In terms of tissue distribution, expressed in developing seedlings, flower filaments and stigma, and the top and bottom parts of carpels in siliques.

It localises to the membrane. Functionally, proton-coupled transporter that transports a wide spectrum of oxo derivatives of heterocyclic nitrogen compounds. The polypeptide is Ureide permease 4 (Arabidopsis thaliana (Mouse-ear cress)).